Here is an 89-residue protein sequence, read N- to C-terminus: Small ribosomal subunit protein uS15 (89 aa).

The protein belongs to the universal ribosomal protein uS15 family. In terms of assembly, part of the 30S ribosomal subunit. Forms a bridge to the 50S subunit in the 70S ribosome, contacting the 23S rRNA.

One of the primary rRNA binding proteins, it binds directly to 16S rRNA where it helps nucleate assembly of the platform of the 30S subunit by binding and bridging several RNA helices of the 16S rRNA. Functionally, forms an intersubunit bridge (bridge B4) with the 23S rRNA of the 50S subunit in the ribosome. The protein is Small ribosomal subunit protein uS15 of Serratia proteamaculans (strain 568).